Consider the following 286-residue polypeptide: 2-hydroxy-6-oxo-6-phenylhexa-2,4-dienoate hydrolase (286 aa).

Residues 42–43 (GG), asparagine 51, asparagine 111, serine 180, and arginine 190 each bind substrate. Catalysis depends on histidine 265, which acts as the Proton acceptor. Tryptophan 266 provides a ligand contact to substrate.

It belongs to the AB hydrolase superfamily. BphD family. Homodimer.

It carries out the reaction 2,6-dioxo-6-phenylhexa-3-enoate + H2O = 2-oxopent-4-enoate + benzoate + H(+). The protein operates within xenobiotic degradation; biphenyl degradation; 2-hydroxy-2,4-pentadienoate and benzoate from biphenyl: step 4/4. Its function is as follows. Catalyzes an unusual C-C bond hydrolysis of 2-hydroxy-6-oxo-6-phenylhexa-2,4-dienoic acid (HOPDA) to produce benzoic acid and 2-hydroxy-2,4-pentadienoic acid (HPD). The protein is 2-hydroxy-6-oxo-6-phenylhexa-2,4-dienoate hydrolase (bphD) of Pseudomonas putida (Arthrobacter siderocapsulatus).